Reading from the N-terminus, the 801-residue chain is Fibroblast growth factor receptor 3 (801 aa).

Residues 1-20 (MVVPACVLVFCVAVVAGATS) form the signal peptide. The Extracellular portion of the chain corresponds to 21–369 (EPPGPEQRVV…TDEAGSVYAG (349 aa)). The region spanning 22–124 (PPGPEQRVVR…VLCHFSVRVT (103 aa)) is the Ig-like C2-type 1 domain. Residues Cys59 and Cys107 are joined by a disulfide bond. The N-linked (GlcNAc...) asparagine glycan is linked to Asn96. The tract at residues 125 to 146 (DAPSSGDDEDGEDVAEDTGAPY) is disordered. The segment covering 130–140 (GDDEDGEDVAE) has biased composition (acidic residues). 2 consecutive Ig-like C2-type domains span residues 145 to 238 (PYWT…YTLD) and 247 to 349 (PILQ…AWLV). Cys170 and Cys222 are oxidised to a cystine. 5 N-linked (GlcNAc...) asparagine glycosylation sites follow: Asn219, Asn256, Asn288, Asn309, and Asn322. Cys269 and Cys333 are oxidised to a cystine. Residues 370 to 390 (VLSYGVVFFLFILVVAAVILC) traverse the membrane as a helical segment. Over 391–801 (RLRSPPKKGL…GPPSNGGPRT (411 aa)) the chain is Cytoplasmic. Residues Ser438 and Ser439 each carry the phosphoserine modification. Positions 466-756 (LTLGKPLGEG…LTVTSTDEYL (291 aa)) constitute a Protein kinase domain. ATP is bound by residues 472 to 480 (LGEGCFGQV) and Lys502. Asp611 (proton acceptor) is an active-site residue. 4 positions are modified to phosphotyrosine; by autocatalysis: Tyr641, Tyr642, Tyr719, and Tyr755. The disordered stretch occupies residues 762–801 (FEQYSPGGQDTPSSSSSGDDSVFTHDLLPPGPPSNGGPRT). Residues 766-782 (SPGGQDTPSSSSSGDDS) show a composition bias toward low complexity. Pro residues predominate over residues 790–801 (PPGPPSNGGPRT).

This sequence belongs to the protein kinase superfamily. Tyr protein kinase family. Fibroblast growth factor receptor subfamily. In terms of assembly, monomer. Homodimer after ligand binding. Interacts with FGF1, FGF2, FGF4, FGF6; FGF8, FGF9, FGF10, FGF17, FGF18, FGF19, FGF20 and FGF23 (in vitro). Interacts with KLB. Affinity for fibroblast growth factors (FGFs) is increased by heparan sulfate glycosaminoglycans that function as coreceptors. Likewise, KLB increases the affinity for FGF19 and FGF21. Interacts with PIK3R1, PLCG1, SOCS1 and SOCS3. Autophosphorylated. Binding of FGF family members together with heparan sulfate proteoglycan or heparin promotes receptor dimerization and autophosphorylation on tyrosine residues. Autophosphorylation occurs in trans between the two FGFR molecules present in the dimer. Phosphorylation at Tyr-719 is essential for stimulation of cell proliferation and activation of PIK3R1, STAT1 and MAP kinase signaling. Phosphorylation at Tyr-755 is required for interaction with PIK3R1 and PLCG1. In terms of processing, ubiquitinated. Is rapidly ubiquitinated after ligand binding and autophosphorylation, leading to receptor internalization and degradation. Subject to both proteasomal and lysosomal degradation. Post-translationally, N-glycosylated in the endoplasmic reticulum. The N-glycan chains undergo further maturation to an Endo H-resistant form in the Golgi apparatus. In terms of tissue distribution, in embryo, expressed in heart, lung, kidney, skin, head and liver but not in muscle. In adult, highest levels in brain. Also expressed in liver, lung, kidney, testis, ovary and uterus. Very low levels in heart, thymus, spleen and muscle.

Its subcellular location is the cell membrane. The protein resides in the cytoplasmic vesicle. It is found in the endoplasmic reticulum. It carries out the reaction L-tyrosyl-[protein] + ATP = O-phospho-L-tyrosyl-[protein] + ADP + H(+). With respect to regulation, present in an inactive conformation in the absence of bound ligand. Ligand binding leads to dimerization and activation by autophosphorylation on tyrosine residues. In terms of biological role, tyrosine-protein kinase that acts as a cell-surface receptor for fibroblast growth factors and plays an essential role in the regulation of cell proliferation, differentiation and apoptosis. Plays an essential role in the regulation of chondrocyte differentiation, proliferation and apoptosis, and is required for normal skeleton development. Regulates both osteogenesis and postnatal bone mineralization by osteoblasts. Promotes apoptosis in chondrocytes, but can also promote cancer cell proliferation. Required for normal development of the inner ear. Phosphorylates PLCG1, CBL and FRS2. Ligand binding leads to the activation of several signaling cascades. Activation of PLCG1 leads to the production of the cellular signaling molecules diacylglycerol and inositol 1,4,5-trisphosphate. Phosphorylation of FRS2 triggers recruitment of GRB2, GAB1, PIK3R1 and SOS1, and mediates activation of RAS, MAPK1/ERK2, MAPK3/ERK1 and the MAP kinase signaling pathway, as well as of the AKT1 signaling pathway. Plays a role in the regulation of vitamin D metabolism. Mutations that lead to constitutive kinase activation or impair normal FGFR3 maturation, internalization and degradation lead to aberrant signaling. Over-expressed or constitutively activated FGFR3 promotes activation of STAT1, STAT5A and STAT5B. Plays a role in postnatal lung development. The protein is Fibroblast growth factor receptor 3 (Fgfr3) of Mus musculus (Mouse).